Consider the following 734-residue polypeptide: Photosystem I P700 chlorophyll a apoprotein A2 (734 aa).

A run of 8 helical transmembrane segments spans residues isoleucine 46–alanine 69, leucine 135–glutamine 158, leucine 175–isoleucine 199, isoleucine 273–tyrosine 291, leucine 330–tyrosine 353, alanine 369–isoleucine 395, alanine 417–histidine 439, and phenylalanine 517–valine 535. [4Fe-4S] cluster is bound by residues cysteine 559 and cysteine 568. Transmembrane regions (helical) follow at residues alanine 575 to tryptophan 596 and leucine 643 to isoleucine 665. 3 residues coordinate chlorophyll a: histidine 654, methionine 662, and tyrosine 670. Tryptophan 671 provides a ligand contact to phylloquinone. The chain crosses the membrane as a helical span at residues leucine 707 to alanine 727.

Belongs to the PsaA/PsaB family. As to quaternary structure, the PsaA/B heterodimer binds the P700 chlorophyll special pair and subsequent electron acceptors. PSI consists of a core antenna complex that captures photons, and an electron transfer chain that converts photonic excitation into a charge separation. The eukaryotic PSI reaction center is composed of at least 11 subunits. It depends on P700 is a chlorophyll a/chlorophyll a' dimer, A0 is one or more chlorophyll a, A1 is one or both phylloquinones and FX is a shared 4Fe-4S iron-sulfur center. as a cofactor.

The protein resides in the plastid. It is found in the chloroplast thylakoid membrane. It carries out the reaction reduced [plastocyanin] + hnu + oxidized [2Fe-2S]-[ferredoxin] = oxidized [plastocyanin] + reduced [2Fe-2S]-[ferredoxin]. Its function is as follows. PsaA and PsaB bind P700, the primary electron donor of photosystem I (PSI), as well as the electron acceptors A0, A1 and FX. PSI is a plastocyanin-ferredoxin oxidoreductase, converting photonic excitation into a charge separation, which transfers an electron from the donor P700 chlorophyll pair to the spectroscopically characterized acceptors A0, A1, FX, FA and FB in turn. Oxidized P700 is reduced on the lumenal side of the thylakoid membrane by plastocyanin. The protein is Photosystem I P700 chlorophyll a apoprotein A2 of Jasminum nudiflorum (Winter jasmine).